The following is a 536-amino-acid chain: Pentatricopeptide repeat-containing protein At2g06000 (536 aa).

PPR repeat units follow at residues 102–136 (SFWT…GVSP), 137–167 (NNRL…SFEV), 170–200 (CCMV…HLRF), 205–239 (DTKT…GCEP), 240–274 (DIVT…SVCS), 276–310 (DVVT…GIYP), 311–345 (TNVT…GCFP), 346–380 (DVVT…GMFP), 381–415 (NAFT…DIIP), 416–450 (QPFM…KCKP), 451–485 (DKIT…GCSP), and 486–523 (DKIT…NVVP).

It belongs to the PPR family. P subfamily.

In Arabidopsis thaliana (Mouse-ear cress), this protein is Pentatricopeptide repeat-containing protein At2g06000.